The sequence spans 243 residues: Proteasome subunit alpha (243 aa).

This sequence belongs to the peptidase T1A family. As to quaternary structure, the 20S proteasome core is composed of 14 alpha and 14 beta subunits that assemble into four stacked heptameric rings, resulting in a barrel-shaped structure. The two inner rings, each composed of seven catalytic beta subunits, are sandwiched by two outer rings, each composed of seven alpha subunits. The catalytic chamber with the active sites is on the inside of the barrel. Has a gated structure, the ends of the cylinder being occluded by the N-termini of the alpha-subunits. Is capped at one or both ends by the proteasome regulatory ATPase, PAN.

The protein localises to the cytoplasm. Its activity is regulated as follows. The formation of the proteasomal ATPase PAN-20S proteasome complex, via the docking of the C-termini of PAN into the intersubunit pockets in the alpha-rings, triggers opening of the gate for substrate entry. Interconversion between the open-gate and close-gate conformations leads to a dynamic regulation of the 20S proteasome proteolysis activity. In terms of biological role, component of the proteasome core, a large protease complex with broad specificity involved in protein degradation. The polypeptide is Proteasome subunit alpha (Pyrobaculum aerophilum (strain ATCC 51768 / DSM 7523 / JCM 9630 / CIP 104966 / NBRC 100827 / IM2)).